An 883-amino-acid polypeptide reads, in one-letter code: Phosphoenolpyruvate carboxylase (883 aa).

Residues histidine 138 and lysine 546 contribute to the active site.

Belongs to the PEPCase type 1 family. The cofactor is Mg(2+).

The enzyme catalyses oxaloacetate + phosphate = phosphoenolpyruvate + hydrogencarbonate. In terms of biological role, forms oxaloacetate, a four-carbon dicarboxylic acid source for the tricarboxylic acid cycle. The protein is Phosphoenolpyruvate carboxylase of Salmonella paratyphi A (strain ATCC 9150 / SARB42).